Here is a 124-residue protein sequence, read N- to C-terminus: Large ribosomal subunit protein eL31 (124 aa).

Belongs to the eukaryotic ribosomal protein eL31 family.

In Aedes aegypti (Yellowfever mosquito), this protein is Large ribosomal subunit protein eL31 (RpL31).